A 183-amino-acid polypeptide reads, in one-letter code: uncharacterized protein (183 aa).

The protein belongs to the herpesviridae US1 family.

This is an uncharacterized protein from Human cytomegalovirus (strain AD169) (HHV-5).